The sequence spans 353 residues: UPF0283 membrane protein Spro_2618 (353 aa).

Transmembrane regions (helical) follow at residues 71-91 (MVTA…VQWV), 101-121 (IAMG…GSVV), and 214-234 (ESTL…FIAW).

It belongs to the UPF0283 family.

The protein localises to the cell inner membrane. The protein is UPF0283 membrane protein Spro_2618 of Serratia proteamaculans (strain 568).